Reading from the N-terminus, the 121-residue chain is Regulator of ribonuclease activity B (121 aa).

Belongs to the RraB family. As to quaternary structure, interacts with the C-terminal region of Rne.

It is found in the cytoplasm. Globally modulates RNA abundance by binding to RNase E (Rne) and regulating its endonucleolytic activity. Can modulate Rne action in a substrate-dependent manner by altering the composition of the degradosome. The polypeptide is Regulator of ribonuclease activity B (Psychromonas ingrahamii (strain DSM 17664 / CCUG 51855 / 37)).